Here is a 178-residue protein sequence, read N- to C-terminus: MSRVGKAPIAIPSGVDVKIDGQHVEVKGPKGTLDLTIPEPIVASIEDGQISVVRPDDHRKNRSLHGLSRSLVNNMVVGVTEGYTIKMEIFGVGYRVALKGKNLEFSLGYSHPVLIEAPEGITFAVDGNTKLSVSGIDKQKVGQIAAIIRRLRKDDPYKGKGIRYEGEQIRRKVGKTGK.

Belongs to the universal ribosomal protein uL6 family. Part of the 50S ribosomal subunit.

In terms of biological role, this protein binds to the 23S rRNA, and is important in its secondary structure. It is located near the subunit interface in the base of the L7/L12 stalk, and near the tRNA binding site of the peptidyltransferase center. The polypeptide is Large ribosomal subunit protein uL6 (Corynebacterium diphtheriae (strain ATCC 700971 / NCTC 13129 / Biotype gravis)).